We begin with the raw amino-acid sequence, 236 residues long: 2-C-methyl-D-erythritol 4-phosphate cytidylyltransferase (236 aa).

The protein belongs to the IspD/TarI cytidylyltransferase family. IspD subfamily.

It catalyses the reaction 2-C-methyl-D-erythritol 4-phosphate + CTP + H(+) = 4-CDP-2-C-methyl-D-erythritol + diphosphate. It participates in isoprenoid biosynthesis; isopentenyl diphosphate biosynthesis via DXP pathway; isopentenyl diphosphate from 1-deoxy-D-xylulose 5-phosphate: step 2/6. Catalyzes the formation of 4-diphosphocytidyl-2-C-methyl-D-erythritol from CTP and 2-C-methyl-D-erythritol 4-phosphate (MEP). This Pseudomonas syringae pv. tomato (strain ATCC BAA-871 / DC3000) protein is 2-C-methyl-D-erythritol 4-phosphate cytidylyltransferase.